An 830-amino-acid polypeptide reads, in one-letter code: Periplasmic nitrate reductase 2 (830 aa).

The tat-type signal signal peptide spans 1–31 (MKVSRRKFIKAQAVASAAAAAGISIPISASN). The 57-residue stretch at 41 to 97 (ITWEKAPCRFCGTGCSVNVGTKEGKVVATHGDIKSPVNRGLNCVKGYFLSKIMYGKD) folds into the 4Fe-4S Mo/W bis-MGD-type domain. Residues Cys-48, Cys-51, Cys-55, and Cys-83 each contribute to the [4Fe-4S] cluster site. Mo-bis(molybdopterin guanine dinucleotide)-binding positions include Lys-85, Gln-152, Asn-177, Cys-181, 245–249 (STFEH), 264–266 (QSD), Met-374, Gln-378, Asn-484, 510–511 (SE), Lys-533, Asp-560, and 720–729 (TGRVIEHWHS). Trp-796 contributes to the substrate binding site. Mo-bis(molybdopterin guanine dinucleotide) contacts are provided by Asn-804 and Lys-821.

It belongs to the prokaryotic molybdopterin-containing oxidoreductase family. NasA/NapA/NarB subfamily. Component of the periplasmic nitrate reductase NapAB complex composed of NapA and NapB. It depends on [4Fe-4S] cluster as a cofactor. Mo-bis(molybdopterin guanine dinucleotide) serves as cofactor. Predicted to be exported by the Tat system. The position of the signal peptide cleavage has not been experimentally proven.

The protein resides in the periplasm. It catalyses the reaction 2 Fe(II)-[cytochrome] + nitrate + 2 H(+) = 2 Fe(III)-[cytochrome] + nitrite + H2O. Catalytic subunit of the periplasmic nitrate reductase complex NapAB. Receives electrons from NapB and catalyzes the reduction of nitrate to nitrite. The sequence is that of Periplasmic nitrate reductase 2 from Photobacterium profundum (strain SS9).